The chain runs to 411 residues: Tyrosine--tRNA ligase (411 aa).

Y34 contacts L-tyrosine. The 'HIGH' region signature appears at 39–48; it reads CTATSLHIGS. L-tyrosine is bound by residues Y171 and Q175. Residues 231-235 carry the 'KMSKS' region motif; that stretch reads KMGKT. K234 contributes to the ATP binding site. In terms of domain architecture, S4 RNA-binding spans 345–411; that stretch reads ISAYNLFYNA…GKKRHILVKV (67 aa).

This sequence belongs to the class-I aminoacyl-tRNA synthetase family. TyrS type 1 subfamily. As to quaternary structure, homodimer.

It localises to the cytoplasm. The enzyme catalyses tRNA(Tyr) + L-tyrosine + ATP = L-tyrosyl-tRNA(Tyr) + AMP + diphosphate + H(+). Its function is as follows. Catalyzes the attachment of tyrosine to tRNA(Tyr) in a two-step reaction: tyrosine is first activated by ATP to form Tyr-AMP and then transferred to the acceptor end of tRNA(Tyr). The chain is Tyrosine--tRNA ligase from Rickettsia prowazekii (strain Madrid E).